Consider the following 258-residue polypeptide: Synaptosomal-associated protein 29 (258 aa).

Residues 1–41 (MSAYPKSYNPFDDDGEDEGARPAPWRDARDLPDGPDAPADR) form a disordered region. Positions 18-32 (EGARPAPWRDARDLP) are enriched in basic and acidic residues. Residues 76 to 107 (ASSEELARQRGVLERTEKMVDKMDQDLKISQK) adopt a coiled-coil conformation. 3 positions are modified to phosphoserine: serine 77, serine 78, and serine 114. 2 positions are modified to phosphothreonine: threonine 130 and threonine 137. Positions 150-191 (ISTSKEQEAKYQASHPNLRKLDDTDPVPRGAGSAMSTDAYPK) are disordered. A phosphoserine mark is found at serine 163, serine 182, serine 185, serine 204, and serine 210. The t-SNARE coiled-coil homology domain occupies 196-258 (RAYHQKIDSN…KSTERKVRQL (63 aa)).

The protein belongs to the SNAP-25 family. In terms of assembly, forms a SNARE complex, composed of VAMP8, SNAP29 and STX17, involved in fusion of autophagosome with lysosome. Interacts with multiple syntaxins including STX6. Interacts with EIPR1. Interacts with STX17; this interaction is increased in the absence of TMEM39A. (Microbial infection) Interacts with Hantaan hantavirus nucleoprotein; this interaction prevents the breakdown of the viral glycoprotein N by virus-triggered autophagy. As to quaternary structure, (Microbial infection) The interaction with STX17 is decreased in presence of SARS coronavirus-2/SARS-CoV-2 ORF3A protein. Found in brain, heart, kidney, liver, lung, placenta, skeletal muscle, spleen and pancreas.

The protein localises to the cytoplasm. The protein resides in the golgi apparatus membrane. Its subcellular location is the cytoplasmic vesicle. It localises to the autophagosome membrane. It is found in the cell projection. The protein localises to the cilium membrane. SNAREs, soluble N-ethylmaleimide-sensitive factor-attachment protein receptors, are essential proteins for fusion of cellular membranes. SNAREs localized on opposing membranes assemble to form a trans-SNARE complex, an extended, parallel four alpha-helical bundle that drives membrane fusion. SNAP29 is a SNARE involved in autophagy through the direct control of autophagosome membrane fusion with the lysososome membrane. Also plays a role in ciliogenesis by regulating membrane fusions. The sequence is that of Synaptosomal-associated protein 29 from Homo sapiens (Human).